The sequence spans 88 residues: Small ribosomal subunit protein bS20 (88 aa).

Belongs to the bacterial ribosomal protein bS20 family.

Binds directly to 16S ribosomal RNA. In Methylorubrum extorquens (strain CM4 / NCIMB 13688) (Methylobacterium extorquens), this protein is Small ribosomal subunit protein bS20.